Consider the following 290-residue polypeptide: UPF0761 membrane protein YihY (290 aa).

Transmembrane regions (helical) follow at residues 44-64 (LLSLVPLVAVVFALFAAFPMF), 104-124 (VGACGLIVTALLLMYSIDSAL), 140-160 (FAVYWMILTLGPLLAGASLAI), 183-203 (IFPLLLSWISFWLLYSIVPTI), 210-230 (AIVGAFVAALLFEAGKKGFAL), and 244-264 (VLAVIPILFVWVYWTWCIVLL).

This sequence belongs to the UPF0761 family.

It localises to the cell inner membrane. The sequence is that of UPF0761 membrane protein YihY from Shigella boydii serotype 4 (strain Sb227).